We begin with the raw amino-acid sequence, 492 residues long: Phosphatidylinositol 4-kinase type 2-beta (492 aa).

Basic and acidic residues predominate over residues 1–11; it reads MEPKQTADARD. The segment at 1–98 is disordered; the sequence is MEPKQTADAR…SDRENMSGGH (98 aa). The PI3K/PI4K catalytic domain occupies 127 to 462; it reads GVFPERISQG…VQMPRVVVER (336 aa). The interval 133–139 is G-loop; it reads ISQGSSG. ATP is bound by residues Ser140 and Lys155. Positions 160–162 are important for substrate binding; the sequence is EPY. The tract at residues 168-181 is important for interaction with membranes; it reads KWTKYFHKICCPCC. ATP contacts are provided by residues 264-267 and 278-279; these read QLFV and RK. The segment at 271–279 is important for interaction with membranes; sequence KEADYWLRK. The catalytic loop stretch occupies residues 308–316; sequence RNTDRGNDN. Positions 353–373 are activation loop; the sequence is AIDNGLAFPFKHPDEWRAYPF. Asp355 contributes to the ATP binding site. Residues 368 to 377 form an important for interaction with membranes region; that stretch reads WRAYPFHWAW.

This sequence belongs to the PI3/PI4-kinase family. Type II PI4K subfamily.

The protein localises to the cytoplasm. The protein resides in the cytosol. It is found in the golgi apparatus membrane. Its subcellular location is the endoplasmic reticulum membrane. It localises to the cell membrane. The protein localises to the early endosome membrane. The catalysed reaction is a 1,2-diacyl-sn-glycero-3-phospho-(1D-myo-inositol) + ATP = a 1,2-diacyl-sn-glycero-3-phospho-(1D-myo-inositol 4-phosphate) + ADP + H(+). In terms of biological role, contributes to the overall PI4-kinase activity of the cell. This contribution may be especially significant in plasma membrane, endosomal and Golgi compartments. The phosphorylation of phosphatidylinositol (PI) to PI4P is the first committed step in the generation of phosphatidylinositol 4,5-bisphosphate (PIP2), a precursor of the second messenger inositol 1,4,5-trisphosphate (InsP3). The chain is Phosphatidylinositol 4-kinase type 2-beta (pi4k2b) from Xenopus tropicalis (Western clawed frog).